We begin with the raw amino-acid sequence, 107 residues long: Guanylin (107 aa).

An N-terminal signal peptide occupies residues 1 to 20 (MNTFLLSALCLGAWAALVGA). A propeptide spanning residues 21-92 (VTVQDGDFSF…LNRLAVIAQD (72 aa)) is cleaved from the precursor. Disulfide bonds link cysteine 61/cysteine 74, cysteine 96/cysteine 104, and cysteine 99/cysteine 107.

Belongs to the guanylin family.

It localises to the secreted. Functionally, endogenous activator of intestinal guanylate cyclase. It stimulates this enzyme through the same receptor binding region as the heat-stable enterotoxins. This chain is Guanylin (GUCA2A), found in Cavia porcellus (Guinea pig).